Consider the following 158-residue polypeptide: Sorbin and SH3 domain-containing protein 2 (158 aa).

The SoHo domain maps to 1–46 (MRAATPLQTVDRPKDWYKTMFKQIHMVHKPDDDTDMYNTPYTYNAG). The tract at residues 28 to 158 (HKPDDDTDMY…TKPQAGRRKV (131 aa)) is disordered. The span at 50–66 (SPYSAQSHPAAKTQTYR) shows a compositional bias: polar residues. Positions 71 to 81 (SHSDNGTDAFK) are enriched in basic and acidic residues. S73 bears the Phosphoserine mark. Positions 86-99 (PVPPPHVPPPVPPL) are enriched in pro residues. Over residues 100-136 (RPRDRSSTEKHDWDPPDRKVDTRKFRSEPRSIFEYEP) the composition is skewed to basic and acidic residues. Alanine amide is present on A153.

In terms of assembly, interacts with ABL1/c-Abl, ABL2/v-Abl/Arg, ACTN, AKT1, CBL, PALLD and PAK1. Interacts with ABL, CBL, DNM1, DNM2, FLOT1, AFDN, PTK2B/PYK2, SAPAP, SPTAN1, SYNJ1, SYNJ2, VCL/vinculin, and WASF. Interacts with PTPN12 and WASF1 via its SH3 domains; this interaction may mediate the partial PTPN12 and WASF1 translocation to focal adhesion sites. In terms of processing, ubiquitinated by CBL. Dephosphorylated by PTPN12. In terms of tissue distribution, expressed in duodenum.

The protein resides in the cytoplasm. It localises to the perinuclear region. It is found in the apical cell membrane. The protein localises to the cell junction. Its subcellular location is the focal adhesion. The protein resides in the cell projection. It localises to the lamellipodium. Its function is as follows. Adapter protein that plays a role in the assembling of signaling complexes, being a link between ABL kinases and actin cytoskeleton. Can form complex with ABL1 and CBL, thus promoting ubiquitination and degradation of ABL1 or with AKT1 and PAK1, thus mediating AKT1-mediated activation of PAK1. May play a role in the regulation of pancreatic cell adhesion, possibly by acting on WASF1 phosphorylation, enhancing phosphorylation by ABL1, as well as dephosphorylation by PTPN12. Increases water and sodium absorption in the intestine and gall-bladder. The sequence is that of Sorbin and SH3 domain-containing protein 2 (SORBS2) from Sus scrofa (Pig).